The primary structure comprises 687 residues: DNA-directed RNA polymerase subunit beta' (687 aa).

Positions 69, 71, 87, and 90 each coordinate Zn(2+). Mg(2+) is bound by residues Asp491, Asp493, and Asp495.

This sequence belongs to the RNA polymerase beta' chain family. RpoC1 subfamily. In plastids the minimal PEP RNA polymerase catalytic core is composed of four subunits: alpha, beta, beta', and beta''. When a (nuclear-encoded) sigma factor is associated with the core the holoenzyme is formed, which can initiate transcription. Mg(2+) is required as a cofactor. It depends on Zn(2+) as a cofactor.

The protein localises to the plastid. The protein resides in the chloroplast. It carries out the reaction RNA(n) + a ribonucleoside 5'-triphosphate = RNA(n+1) + diphosphate. DNA-dependent RNA polymerase catalyzes the transcription of DNA into RNA using the four ribonucleoside triphosphates as substrates. This Glycine max (Soybean) protein is DNA-directed RNA polymerase subunit beta'.